The following is a 1011-amino-acid chain: MFTWAMKKIFGTSHERAIRRMRPRVEAIGRMEPELQKLSDAQLRAKTAEFKEKLANGATLDDILVPAFAVCREASKRALKMRHYDVQLIGGMVLHNGCIAEMRTGEGKTLVATLPCYLNALEGKGVHVVTVNDYLARRDAEWMGKLYGFLGLSTGVVVNQQGDAEKRHAYRCDITYGQNNEFGFDYLRDNMKFSALEYAQRPLHYAIVDEVDSILIDEARTPLIISGQGERSSDKYRTINEVIPQLRNEEHYALDEKAHSVTLTDEGVETAERLLASLQVLKGTNLYDPVNLETLHILNQCLRAHTLYKRDVNYMVRDGKVLIIDEFTGRVLAGRRWSDGLHQAVEAKENVRIQEESRTMATITFQNLFRLYKKLSGMTGTADTEAAEFHSTYKLDCVIIPTNKPVVRKDYEDLVYKTEKEKFTAVINEILEKHELGQPILVGTTSVEKSTAISRILAKRGVKHNVLNAKHHENEAYVVAQAGRKGAITVSTNMAGRGTDIILGGNAEMLAKLKFKEQNRQPEAEPEAFEALVEEIKKECTAEGDEIREIGGLYILGTERHESRRIDNQLRGRAGRQGDPGTSKFYLSLEDDLMRIFAGDRVKNLMERMGMPDDEPIEHPWVTKSVENAQKKVEERNFDIRKNLLEYDDVMSAQRKTIYDMRQSLLVGRYSPEILDEEGKPTGEKRTIKPLASIVELVRPDVGYLLGMFANDPVMPLDADGNRREIVRKDFEKTERFVELENMQREIYTRWGVKIELETRADKVLEIYDECSELMPLALTEQRERLLDLMDRIIGAMVEESCPARKPPEDWDWGGIFQGFREHFSVELPDDIAHIGDQETLARELYERAEKAYEKREEEIGVELSLRIFRHLYLEELDKAWVDHLTDMDHLRDGIGLRGYGQKDPKQEYKKEGYNMFVNMVARVSSNVVTKLFSVNVRRAEQEEAQIEAADRERHAAALLDAVAQHDESLPLGANPAPARPQPAVMQEQECPCGSGKPFNKCHGGEDEATA.

Residues glutamine 87, 105–109 (GEGKT), and aspartate 500 contribute to the ATP site. The segment at 969 to 1011 (SLPLGANPAPARPQPAVMQEQECPCGSGKPFNKCHGGEDEATA) is disordered. Zn(2+)-binding residues include cysteine 991, cysteine 993, cysteine 1002, and histidine 1003.

The protein belongs to the SecA family. Monomer and homodimer. Part of the essential Sec protein translocation apparatus which comprises SecA, SecYEG and auxiliary proteins SecDF-YajC and YidC. The cofactor is Zn(2+).

The protein resides in the cell inner membrane. The protein localises to the cytoplasm. The enzyme catalyses ATP + H2O + cellular proteinSide 1 = ADP + phosphate + cellular proteinSide 2.. Functionally, part of the Sec protein translocase complex. Interacts with the SecYEG preprotein conducting channel. Has a central role in coupling the hydrolysis of ATP to the transfer of proteins into and across the cell membrane, serving as an ATP-driven molecular motor driving the stepwise translocation of polypeptide chains across the membrane. The protein is Protein translocase subunit SecA of Sorangium cellulosum (strain So ce56) (Polyangium cellulosum (strain So ce56)).